The primary structure comprises 308 residues: Glutaminase (308 aa).

Substrate-binding residues include S66, N117, E161, N168, Y192, Y244, and V262.

The protein belongs to the glutaminase family. In terms of assembly, homotetramer.

The enzyme catalyses L-glutamine + H2O = L-glutamate + NH4(+). The chain is Glutaminase from Klebsiella pneumoniae subsp. pneumoniae (strain ATCC 700721 / MGH 78578).